Consider the following 349-residue polypeptide: Ribosome production factor 1 (349 aa).

2 disordered regions span residues 1–58 and 71–105; these read MAKA…SEIK and KQQQRKEKLAAKKKLKKEREALGDKAPPKPVPKTI. Basic and acidic residues predominate over residues 87–97; sequence KEREALGDKAP. One can recognise a Brix domain in the interval 142–325; that stretch reads PKILITTSDR…LRSLQKGTFD (184 aa). Residues 303 to 320 form an RNA-binding region; it reads VGIQELGPRFTLKLRSLQ.

It localises to the nucleus. It is found in the nucleolus. May be required for ribosome biogenesis. This chain is Ribosome production factor 1 (Rpf1), found in Mus musculus (Mouse).